Reading from the N-terminus, the 284-residue chain is RNase adapter protein RapZ (284 aa).

8–15 (GRSGSGKS) contacts ATP. GTP is bound at residue 56–59 (DVRN). Residues 266 to 284 (RSRGKNVQSRHRTLEKRKT) are RNA-binding.

Belongs to the RapZ-like family. RapZ subfamily. Homotrimer.

Modulates the synthesis of GlmS, by affecting the processing and stability of the regulatory small RNA GlmZ. When glucosamine-6-phosphate (GlcN6P) concentrations are high in the cell, RapZ binds GlmZ and targets it to cleavage by RNase E. Consequently, GlmZ is inactivated and unable to activate GlmS synthesis. Under low GlcN6P concentrations, RapZ is sequestered and inactivated by an other regulatory small RNA, GlmY, preventing GlmZ degradation and leading to synthesis of GlmS. The sequence is that of RNase adapter protein RapZ from Escherichia fergusonii (strain ATCC 35469 / DSM 13698 / CCUG 18766 / IAM 14443 / JCM 21226 / LMG 7866 / NBRC 102419 / NCTC 12128 / CDC 0568-73).